A 40-amino-acid chain; its full sequence is Small polypeptide DEVIL 6 (40 aa).

The segment at 9-40 (SSSRGLGGVLREQRAKLYIIKRCVVMLLCWQD) is required for DVL/RTFL small polypeptide activity. Residues 12-28 (RGLGGVLREQRAKLYII) traverse the membrane as a helical segment.

Belongs to the DVL/RTFL small polypeptides family.

The protein localises to the cell membrane. Small polypeptide acting as a regulatory molecule which coordinates cellular responses required for differentiation, growth and development, probably by restricting polar cell proliferation in lateral organs and coordinating socket cell recruitment and differentiation at trichome sites. This chain is Small polypeptide DEVIL 6, found in Arabidopsis thaliana (Mouse-ear cress).